The chain runs to 291 residues: ATP phosphoribosyltransferase (291 aa).

Belongs to the ATP phosphoribosyltransferase family. Long subfamily. Mg(2+) is required as a cofactor.

It localises to the cytoplasm. It carries out the reaction 1-(5-phospho-beta-D-ribosyl)-ATP + diphosphate = 5-phospho-alpha-D-ribose 1-diphosphate + ATP. It participates in amino-acid biosynthesis; L-histidine biosynthesis; L-histidine from 5-phospho-alpha-D-ribose 1-diphosphate: step 1/9. Its activity is regulated as follows. Feedback inhibited by histidine. Its function is as follows. Catalyzes the condensation of ATP and 5-phosphoribose 1-diphosphate to form N'-(5'-phosphoribosyl)-ATP (PR-ATP). Has a crucial role in the pathway because the rate of histidine biosynthesis seems to be controlled primarily by regulation of HisG enzymatic activity. The chain is ATP phosphoribosyltransferase from Geotalea daltonii (strain DSM 22248 / JCM 15807 / FRC-32) (Geobacter daltonii).